We begin with the raw amino-acid sequence, 200 residues long: 3-isopropylmalate dehydratase small subunit (200 aa).

The protein belongs to the LeuD family. LeuD type 1 subfamily. In terms of assembly, heterodimer of LeuC and LeuD.

It carries out the reaction (2R,3S)-3-isopropylmalate = (2S)-2-isopropylmalate. It participates in amino-acid biosynthesis; L-leucine biosynthesis; L-leucine from 3-methyl-2-oxobutanoate: step 2/4. Its function is as follows. Catalyzes the isomerization between 2-isopropylmalate and 3-isopropylmalate, via the formation of 2-isopropylmaleate. This chain is 3-isopropylmalate dehydratase small subunit, found in Actinobacillus pleuropneumoniae serotype 5b (strain L20).